The sequence spans 223 residues: Deoxyribose-phosphate aldolase (223 aa).

D91 acts as the Proton donor/acceptor in catalysis. The Schiff-base intermediate with acetaldehyde role is filled by K153. K182 serves as the catalytic Proton donor/acceptor.

This sequence belongs to the DeoC/FbaB aldolase family. DeoC type 1 subfamily.

It is found in the cytoplasm. It catalyses the reaction 2-deoxy-D-ribose 5-phosphate = D-glyceraldehyde 3-phosphate + acetaldehyde. It participates in carbohydrate degradation; 2-deoxy-D-ribose 1-phosphate degradation; D-glyceraldehyde 3-phosphate and acetaldehyde from 2-deoxy-alpha-D-ribose 1-phosphate: step 2/2. Its function is as follows. Catalyzes a reversible aldol reaction between acetaldehyde and D-glyceraldehyde 3-phosphate to generate 2-deoxy-D-ribose 5-phosphate. This is Deoxyribose-phosphate aldolase from Streptococcus pyogenes serotype M3 (strain ATCC BAA-595 / MGAS315).